Here is a 2839-residue protein sequence, read N- to C-terminus: PDZ domain-containing protein 2 (2839 aa).

The PDZ 1 domain maps to 85–182; that stretch reads LSFGNIPVFG…LIMLRRFKHK (98 aa). Positions 185–318 are disordered; that stretch reads STYNGNSSNS…RFSKGGKTDF (134 aa). The segment covering 189–202 has biased composition (low complexity); the sequence is GNSSNSSEPGETPT. Over residues 280–296 the composition is skewed to basic and acidic residues; the sequence is HLERSEVDRGTEHRIPK. The region spanning 334–419 is the PDZ 2 domain; it reads KMELLKESDG…MVQLVVASKE (86 aa). Positions 437-447 are enriched in polar residues; it reads TSSVEDVSSWT. Residues 437–501 are disordered; the sequence is TSSVEDVSSW…PKQGSNKIKL (65 aa). Positions 448 to 461 are enriched in acidic residues; that stretch reads DNEDQEADGEEDEG. S568 carries the post-translational modification Phosphoserine. The PDZ 3 domain maps to 586-672; that stretch reads IIGLYKEKGK…GLFVLTVRTK (87 aa). Residues 678–697 show a composition bias toward polar residues; it reads LTPCSTPTHMSRSASPNFNT. The interval 678–723 is disordered; that stretch reads LTPCSTPTHMSRSASPNFNTSGGASAGGSDEGSSSSLGRKTPGPKD. Residues 728-813 form the PDZ 4 domain; that stretch reads EVTLNKEPRV…GPVRLVIGRH (86 aa). Composition is skewed to polar residues over residues 832–843 and 894–908; these read YQESKEANSSPG and GCST…PSTS. 2 disordered regions span residues 832–852 and 879–921; these read YQES…KSPS and DFMV…ANSL. 2 positions are modified to phosphoserine: S944 and S948. 14 disordered regions span residues 984–1033, 1062–1155, 1216–1493, 1530–1620, 1638–1712, 1809–1865, 1892–1976, 2009–2079, 2135–2166, 2178–2211, 2232–2251, 2353–2383, 2426–2481, and 2516–2564; these read SLPG…ISAP, SAEA…PCDL, KAAS…GAPA, FHED…LPTQ, PRES…SPLS, NQGT…DLSK, GKAK…SVSD, PDRG…GNIM, QVAE…SMAK, IRKA…GEDH, HFGR…DSQV, AKSG…GSLG, SRQN…SRSK, and ITPR…GEAA. Residues 1012 to 1022 show a composition bias toward basic and acidic residues; it reads MDVHNQEERPR. 7 stretches are compositionally biased toward polar residues: residues 1092–1111, 1138–1147, 1221–1236, 1250–1269, 1305–1315, 1384–1401, and 1440–1453; these read RTDT…QQKS, SGSQTVNLTG, LGQQ…SDLI, SKTS…SQPA, TRSASETSTPH, SVSS…PSTD, and RSPS…GSQE. Positions 1662–1672 are enriched in low complexity; sequence SSQPSSLLEMS. Polar residues predominate over residues 1698–1711; that stretch reads EVTSASSAMENSPL. S1850 is subject to Phosphoserine. A compositionally biased stretch (polar residues) spans 1919-1931; that stretch reads SPQTSHKTLSKAV. Positions 1936–1945 are enriched in basic and acidic residues; sequence HVADHEDPDR. The segment covering 2139-2152 has biased composition (low complexity); it reads SSTSHPSSLPSHAS. Residues 2370–2383 show a composition bias toward low complexity; the sequence is GRRSSGSIVSGSLG. 3 stretches are compositionally biased toward polar residues: residues 2426–2437, 2470–2480, and 2546–2559; these read SRQNPPETSSKG, RHTQPSPVSRS, and PKTS…SASD. One can recognise a PDZ 5 domain in the interval 2622–2706; that stretch reads FIVLNRKEGS…HKDALVVIKK (85 aa). The interval 2709 to 2729 is disordered; sequence DQPRPSARQEPPTANGKGLLS. One can recognise a PDZ 6 domain in the interval 2750 to 2835; it reads CVEVLKTSAG…GPVQLLIRKH (86 aa).

Interacts with SCN10A, CTNND2 and PKP4. A secreted form is produced by caspase-mediated proteolytic cleavage. Isoform 2 is expressed (at protein level) in prostate and many prostate tumors.

The protein resides in the nucleus. It is found in the cytoplasm. It localises to the endoplasmic reticulum. Its subcellular location is the secreted. The chain is PDZ domain-containing protein 2 (PDZD2) from Homo sapiens (Human).